Consider the following 360-residue polypeptide: 3-isopropylmalate dehydrogenase (360 aa).

Residues 66-75 (RCHPARRRRR) are compositionally biased toward basic residues. Residues 66 to 101 (RCHPARRRRRSEMGRHRPGHPPGARPAENPFATGPV) are disordered. Substrate is bound by residues arginine 133 and aspartate 223. Mg(2+) contacts are provided by aspartate 223, aspartate 247, and aspartate 251.

Belongs to the isocitrate and isopropylmalate dehydrogenases family. LeuB type 1 subfamily. In terms of assembly, homodimer. Mg(2+) serves as cofactor. The cofactor is Mn(2+).

The protein resides in the cytoplasm. The enzyme catalyses (2R,3S)-3-isopropylmalate + NAD(+) = 4-methyl-2-oxopentanoate + CO2 + NADH. It participates in amino-acid biosynthesis; L-leucine biosynthesis; L-leucine from 3-methyl-2-oxobutanoate: step 3/4. In terms of biological role, catalyzes the oxidation of 3-carboxy-2-hydroxy-4-methylpentanoate (3-isopropylmalate) to 3-carboxy-4-methyl-2-oxopentanoate. The product decarboxylates to 4-methyl-2 oxopentanoate. The chain is 3-isopropylmalate dehydrogenase (leuB) from Azotobacter vinelandii.